Here is a 346-residue protein sequence, read N- to C-terminus: Biotin synthase (346 aa).

The region spanning 38 to 256 is the Radical SAM core domain; the sequence is RQVQVSTLLS…IAVARIMMPT (219 aa). [4Fe-4S] cluster contacts are provided by C53, C57, and C60. [2Fe-2S] cluster is bound by residues C97, C128, C188, and R260.

This sequence belongs to the radical SAM superfamily. Biotin synthase family. As to quaternary structure, homodimer. [4Fe-4S] cluster serves as cofactor. [2Fe-2S] cluster is required as a cofactor.

The enzyme catalyses (4R,5S)-dethiobiotin + (sulfur carrier)-SH + 2 reduced [2Fe-2S]-[ferredoxin] + 2 S-adenosyl-L-methionine = (sulfur carrier)-H + biotin + 2 5'-deoxyadenosine + 2 L-methionine + 2 oxidized [2Fe-2S]-[ferredoxin]. It functions in the pathway cofactor biosynthesis; biotin biosynthesis; biotin from 7,8-diaminononanoate: step 2/2. Its function is as follows. Catalyzes the conversion of dethiobiotin (DTB) to biotin by the insertion of a sulfur atom into dethiobiotin via a radical-based mechanism. The chain is Biotin synthase from Shigella flexneri serotype 5b (strain 8401).